The sequence spans 146 residues: MSDIQLNTLKPAEGAKHAKRRVGRGIGSGLGKTAGRGHKGQKSRSGGFHKVGFEGGQMPLQRRLPKRGFTPLGQHLYAEVRLSDLQALPVDEIDVQTLKAAGVVGQAVRYAKVIKSGELSRKVTLKGLTATAGARAAIEAAGGSLA.

A disordered region spans residues 1–65; that stretch reads MSDIQLNTLK…GQMPLQRRLP (65 aa). Over residues 24–34 the composition is skewed to gly residues; it reads RGIGSGLGKTA.

Belongs to the universal ribosomal protein uL15 family. Part of the 50S ribosomal subunit.

In terms of biological role, binds to the 23S rRNA. The chain is Large ribosomal subunit protein uL15 from Bordetella petrii (strain ATCC BAA-461 / DSM 12804 / CCUG 43448).